The primary structure comprises 150 residues: Small ribosomal subunit protein eS6 (150 aa).

It belongs to the eukaryotic ribosomal protein eS6 family.

This is Small ribosomal subunit protein eS6 from Caldivirga maquilingensis (strain ATCC 700844 / DSM 13496 / JCM 10307 / IC-167).